The following is a 489-amino-acid chain: MLLISRIGARHIRKKPLHVENHYRSFTKFDSFGNSPIPASKQRFVPTSGTYPKGFLVGSTNVGIKPDGLSQPDLILVASEKKWETCGAAVLTKNEFPAASVVVTRDLLKKSKGRGLRGVVANSWCANLLTGEKGLEDSRNMSREAGRIVSGEGTGQGEESVMVMHTGMGGQRLRIDNIIQGFPNLQQEMGTTHDHWIEAARGICTTDTFPKLASRTFTLPSSPETTFSIAGITKGAGMIHPNMATTLGIICTDAPITPPALQQLLSTAADKSYNCISIEGDTSTNDMVAMLANGAAAPNNAHFPVDFDSSAESQSEDFIAFQRMLIEFMADLAKLVVRDGEGATKFITIRVRGAPTYPAGKHIASVIARSVLFKTGVYGKDPNPIGVLAALGYSLMGTEFAGKGIINPESTSVSFMPVDGTDELNFVKKGRLVKVDEVRAKKLMEEEDVEVIVDLRDDGRKWREDDEEAVYWTCDITHEFVTINGDFGN.

The N-terminal 11 residues, 1–11, are a transit peptide targeting the mitochondrion; it reads MLLISRIGARH. Residues Thr205, Lys234, Thr245, Glu341, and Asn484 each coordinate substrate. Thr245 serves as the catalytic Nucleophile.

This sequence belongs to the ArgJ family. Heterodimer of an alpha and a beta chain. Post-translationally, the alpha and beta chains are autoproteolytically processed from a single precursor protein within the mitochondrion.

Its subcellular location is the mitochondrion matrix. The catalysed reaction is N(2)-acetyl-L-ornithine + L-glutamate = N-acetyl-L-glutamate + L-ornithine. It carries out the reaction L-glutamate + acetyl-CoA = N-acetyl-L-glutamate + CoA + H(+). The protein operates within amino-acid biosynthesis; L-arginine biosynthesis; L-ornithine and N-acetyl-L-glutamate from L-glutamate and N(2)-acetyl-L-ornithine (cyclic): step 1/1. It functions in the pathway amino-acid biosynthesis; L-arginine biosynthesis; N(2)-acetyl-L-ornithine from L-glutamate: step 1/4. In terms of biological role, catalyzes two activities which are involved in the cyclic version of arginine biosynthesis: the synthesis of acetylglutamate from glutamate and acetyl-CoA, and of ornithine by transacetylation between acetylornithine and glutamate. This is Arginine biosynthesis bifunctional protein ArgJ 2, mitochondrial from Sclerotinia sclerotiorum (strain ATCC 18683 / 1980 / Ss-1) (White mold).